We begin with the raw amino-acid sequence, 85 residues long: Cell division topological specificity factor (85 aa).

It belongs to the MinE family.

Its function is as follows. Prevents the cell division inhibition by proteins MinC and MinD at internal division sites while permitting inhibition at polar sites. This ensures cell division at the proper site by restricting the formation of a division septum at the midpoint of the long axis of the cell. This Cellvibrio japonicus (strain Ueda107) (Pseudomonas fluorescens subsp. cellulosa) protein is Cell division topological specificity factor.